Reading from the N-terminus, the 214-residue chain is Cutinase CUT2 (214 aa).

A signal peptide spans 1–18 (MQFSLSIATAILAATASA). Residues Cys40 and Cys117 are joined by a disulfide bond. Residue Ser128 is the Nucleophile of the active site. Cys179 and Cys186 are disulfide-bonded. Asp183 is an active-site residue. The active-site Proton donor/acceptor is His196.

The protein belongs to the cutinase family. Post-translationally, the 2 disulfide bonds play a critical role in holding the catalytic residues in juxta-position; reduction of the disulfide bridges results in the complete inactivation of the enzyme.

The protein resides in the secreted. It carries out the reaction cutin + H2O = cutin monomers.. Functionally, catalyzes the hydrolysis of complex carboxylic polyesters found in the cell wall of plants. Degrades cutin, a macromolecule that forms the structure of the plant cuticle. Required for efficient penetration of the host plant cuticle by the appressorium during the initial stage of fungal infection. This Pyricularia oryzae (strain 70-15 / ATCC MYA-4617 / FGSC 8958) (Rice blast fungus) protein is Cutinase CUT2.